The following is a 1895-amino-acid chain: Probable WRKY transcription factor 19 (1895 aa).

Positions 1 to 85 (MSEKEELPLT…SGSGLSQQLN (85 aa)) are disordered. Residues 10–22 (TLTSIGAATATSD) are compositionally biased toward polar residues. Residues 28–39 (GSSGEGISSSSS) show a composition bias toward low complexity. A compositionally biased stretch (polar residues) spans 46–62 (MQNSPTGLMISQSSSMC). The span at 75 to 85 (SSGSGLSQQLN) shows a compositional bias: low complexity. The PAH domain maps to 291–371 (RPLTIDGGGN…LGFNTYLSKE (81 aa)). A compositionally biased stretch (polar residues) spans 408-417 (ANMQPQTEYP). Disordered regions lie at residues 408-442 (ANMQ…SSLL), 517-538 (YKDR…TYLS), and 580-620 (EASD…ADAS). Low complexity predominate over residues 418-427 (SSSAVQSFSS). A compositionally biased stretch (polar residues) spans 428-442 (GQPQIPTSAPDSSLL). Residues 462–526 (NVDKQVNDGY…YKDRHNHEPP (65 aa)) constitute a DNA-binding region (WRKY 1). The WRKY 2 DNA-binding region spans 635–700 (SEVDNLDDGY…SLCRRGISVY (66 aa)). Positions 666 to 808 (KDYDVVIRYG…EIVRDALKVL (143 aa)) constitute a TIR domain. In terms of domain architecture, NB-ARC spans 800-1087 (IVRDALKVLC…LDGCGFSAHV (288 aa)). Position 844-851 (844-851 (GTVGIGKT)) interacts with ATP. 10 LRR repeats span residues 1206–1227 (KLRL…FNPE), 1228–1249 (NLVE…KKAR), 1259–1281 (KLKK…SSAT), 1282–1304 (NLEH…ISYL), 1306–1328 (KLVF…VDLE), 1329–1351 (SLEV…SPNV), 1352–1371 (KELY…IKNL), 1373–1395 (LLEK…IYKL), 1397–1419 (HLET…SRRM), and 1421–1442 (CLRF…ISYL). The segment at 1562-1583 (ETVAPPSSSSEAREEEVETEET) is disordered. One can recognise a Protein kinase domain in the interval 1626–1877 (WQKGQLLGRG…AAELLNHPFV (252 aa)). Residues 1632–1640 (LGRGSLGSV) and K1654 contribute to the ATP site. Residue D1758 is part of the active site.

It belongs to the disease resistance X-TIR-NB-LRR-X family.

The protein resides in the nucleus. Functionally, transcription factor. Interacts specifically with the W box (5'-(T)TGAC[CT]-3'), a frequently occurring elicitor-responsive cis-acting element. May act also as a disease resistance protein with a serine/threonine-protein kinase activity. The protein is Probable WRKY transcription factor 19 (WRKY19) of Arabidopsis thaliana (Mouse-ear cress).